Here is a 263-residue protein sequence, read N- to C-terminus: Trans-aconitate 2-methyltransferase (263 aa).

The protein belongs to the methyltransferase superfamily. Tam family.

The protein localises to the cytoplasm. It catalyses the reaction trans-aconitate + S-adenosyl-L-methionine = (E)-3-(methoxycarbonyl)pent-2-enedioate + S-adenosyl-L-homocysteine. In terms of biological role, catalyzes the S-adenosylmethionine monomethyl esterification of trans-aconitate. The sequence is that of Trans-aconitate 2-methyltransferase from Mycobacterium marinum (strain ATCC BAA-535 / M).